A 103-amino-acid chain; its full sequence is Putative membrane protein insertion efficiency factor (103 aa).

This sequence belongs to the UPF0161 family.

It localises to the cell inner membrane. Could be involved in insertion of integral membrane proteins into the membrane. The polypeptide is Putative membrane protein insertion efficiency factor (Chlamydia caviae (strain ATCC VR-813 / DSM 19441 / 03DC25 / GPIC) (Chlamydophila caviae)).